A 199-amino-acid chain; its full sequence is Peroxisomal membrane protein PEX17 (199 aa).

It is found in the peroxisome membrane. Component of the peroxisomal translocation machinery with PEX13 and PEX14. Interacts indirectly with the PTS1 receptor (PAS10/PEX5) and directly binds to PEX14. Required for import of both PTS1 and PTS2 proteins. This chain is Peroxisomal membrane protein PEX17 (PEX17), found in Saccharomyces cerevisiae (strain ATCC 204508 / S288c) (Baker's yeast).